We begin with the raw amino-acid sequence, 527 residues long: Probable bifunctional methylthioribulose-1-phosphate dehydratase/enolase-phosphatase E1 (527 aa).

A methylthioribulose-1-phosphate dehydratase region spans residues 1-244; that stretch reads MAAAAAPAVA…AIKLHQLGLD (244 aa). Position 116 (Cys-116) interacts with substrate. Residues His-134 and His-136 each contribute to the Zn(2+) site. Glu-159 (proton donor/acceptor; for methylthioribulose-1-phosphate dehydratase activity) is an active-site residue. His-209 lines the Zn(2+) pocket. Positions 288-527 are enolase-phosphatase E1; sequence IVLDIEGTTT…FKTINSLSEI (240 aa). Mg(2+)-binding residues include Asp-291 and Glu-293. Residues 426 to 427 and Lys-460 each bind substrate; that span reads SS. Mg(2+) is bound at residue Asp-486.

The protein in the N-terminal section; belongs to the aldolase class II family. MtnB subfamily. In the C-terminal section; belongs to the HAD-like hydrolase superfamily. MasA/MtnC family. It depends on Zn(2+) as a cofactor. The cofactor is Mg(2+).

The enzyme catalyses 5-(methylsulfanyl)-D-ribulose 1-phosphate = 5-methylsulfanyl-2,3-dioxopentyl phosphate + H2O. The catalysed reaction is 5-methylsulfanyl-2,3-dioxopentyl phosphate + H2O = 1,2-dihydroxy-5-(methylsulfanyl)pent-1-en-3-one + phosphate. Its pathway is amino-acid biosynthesis; L-methionine biosynthesis via salvage pathway; L-methionine from S-methyl-5-thio-alpha-D-ribose 1-phosphate: step 2/6. It functions in the pathway amino-acid biosynthesis; L-methionine biosynthesis via salvage pathway; L-methionine from S-methyl-5-thio-alpha-D-ribose 1-phosphate: step 3/6. It participates in amino-acid biosynthesis; L-methionine biosynthesis via salvage pathway; L-methionine from S-methyl-5-thio-alpha-D-ribose 1-phosphate: step 4/6. This Ricinus communis (Castor bean) protein is Probable bifunctional methylthioribulose-1-phosphate dehydratase/enolase-phosphatase E1.